The following is a 346-amino-acid chain: Glucose-6-phosphatase 3 (346 aa).

Residues 1–24 (MESTLGAGIAMAEALQNQLPWLEN) lie on the Lumenal side of the membrane. A helical transmembrane segment spans residues 25-45 (VWLWVTFLGDPKSLFLFYFPA). Residues 46-54 (AYYASRRVG) lie on the Cytoplasmic side of the membrane. A helical membrane pass occupies residues 55–75 (IAVLWISLITEWLNLVFKWFL). At 76-108 (FGDRPFWWVHESGYYSQAPAQVHQFPSSCETGP) the chain is on the lumenal side. Arg-79 is a substrate binding site. Residues 109–129 (GSPSGHCMITGAALWPIMTAV) form a helical membrane-spanning segment. The active-site Proton donor is the His-114. The Cytoplasmic segment spans residues 130-140 (SSQMATRAHSR). Residues 141–162 (WVRVIPSLAYCTFLLAVGLSRV) form a helical membrane-spanning segment. Arg-161 lines the substrate pocket. Topologically, residues 163–167 (FLLAH) are lumenal. The Nucleophile role is filled by His-167. Residues 168-186 (FPHQVLAGLITGAVLGWLM) traverse the membrane as a helical segment. At 187–197 (TPQVPMERELS) the chain is on the cytoplasmic side. A helical membrane pass occupies residues 198 to 218 (FYGLTSLALLLGASLIYWTLF). Residues 219–254 (TLGLDLSWSINLASKWCERPEWVHLDSRPFASLSRD) lie on the Lumenal side of the membrane. A helical transmembrane segment spans residues 255–273 (SGAALGLGIALHSPCYAQV). Residues 274 to 283 (RRAHLGYGQK) are Cytoplasmic-facing. The chain crosses the membrane as a helical span at residues 284-304 (LVCLVLAMGLLGPLNWLGYPP). Over 305–307 (QIS) the chain is Lumenal. The helical transmembrane segment at 308–328 (LFYIFNFLKYTLWPCLVLALV) threads the bilayer. The Cytoplasmic portion of the chain corresponds to 329–346 (PWLVHMFSAQEAPPIRSS).

It belongs to the glucose-6-phosphatase family.

It localises to the endoplasmic reticulum membrane. It carries out the reaction D-glucose 6-phosphate + H2O = D-glucose + phosphate. Its pathway is carbohydrate biosynthesis; gluconeogenesis. Inhibited by vanadate. In terms of biological role, hydrolyzes glucose-6-phosphate to glucose in the endoplasmic reticulum. May form with the glucose-6-phosphate transporter (SLC37A4/G6PT) a ubiquitously expressed complex responsible for glucose production through glycogenolysis and gluconeogenesis. Probably required for normal neutrophil function. In Bos taurus (Bovine), this protein is Glucose-6-phosphatase 3 (G6PC3).